A 333-amino-acid polypeptide reads, in one-letter code: Ornithine carbamoyltransferase (333 aa).

Carbamoyl phosphate-binding positions include 56-59 (STRT), R107, and 134-137 (HPTQ). L-ornithine-binding positions include N167, D231, and 235-236 (SM). Residues 273 to 274 (CL) and R318 contribute to the carbamoyl phosphate site.

The protein belongs to the aspartate/ornithine carbamoyltransferase superfamily. OTCase family.

It is found in the cytoplasm. The catalysed reaction is carbamoyl phosphate + L-ornithine = L-citrulline + phosphate + H(+). It functions in the pathway amino-acid degradation; L-arginine degradation via ADI pathway; carbamoyl phosphate from L-arginine: step 2/2. In terms of biological role, reversibly catalyzes the transfer of the carbamoyl group from carbamoyl phosphate (CP) to the N(epsilon) atom of ornithine (ORN) to produce L-citrulline. This chain is Ornithine carbamoyltransferase, found in Clostridium botulinum (strain 657 / Type Ba4).